Here is a 251-residue protein sequence, read N- to C-terminus: tRNA pseudouridine synthase A 1 (251 aa).

Asp-52 (nucleophile) is an active-site residue. Position 110 (Tyr-110) interacts with substrate.

The protein belongs to the tRNA pseudouridine synthase TruA family. Homodimer.

It carries out the reaction uridine(38/39/40) in tRNA = pseudouridine(38/39/40) in tRNA. Formation of pseudouridine at positions 38, 39 and 40 in the anticodon stem and loop of transfer RNAs. The chain is tRNA pseudouridine synthase A 1 from Desulfotalea psychrophila (strain LSv54 / DSM 12343).